The following is a 146-amino-acid chain: Aminoglycoside N(6')-acetyltransferase type 1 (146 aa).

The N-acetyltransferase domain occupies 1–146 (MIVICDHDNL…RVVFYRKTLG (146 aa)). 4 residues coordinate substrate: Trp-21, Tyr-66, Glu-79, and Asp-115. Asn-120 provides a ligand contact to acetyl-CoA. Glu-136 contributes to the substrate binding site.

In terms of assembly, homodimer.

It carries out the reaction kanamycin B + acetyl-CoA = N(6')-acetylkanamycin B + CoA + H(+). Catalyzes the transfer of an acetyl group from acetyl-CoA to the 6'-amino group of aminoglycoside molecules conferring resistance to antibiotics containing the purpurosamine ring including amikacin, tobramycin, netilmicin, isepamicin and sisomicin. This Serratia marcescens protein is Aminoglycoside N(6')-acetyltransferase type 1.